Here is a 215-residue protein sequence, read N- to C-terminus: Octanoyltransferase (215 aa).

One can recognise a BPL/LPL catalytic domain in the interval 31 to 206 (PDSQDEIWLV…QLVKHLDYAE (176 aa)). Substrate is bound by residues 70 to 77 (RGGQVTYH), 137 to 139 (SLG), and 150 to 152 (GLA). Cys168 (acyl-thioester intermediate) is an active-site residue.

It belongs to the LipB family.

It localises to the cytoplasm. It catalyses the reaction octanoyl-[ACP] + L-lysyl-[protein] = N(6)-octanoyl-L-lysyl-[protein] + holo-[ACP] + H(+). It participates in protein modification; protein lipoylation via endogenous pathway; protein N(6)-(lipoyl)lysine from octanoyl-[acyl-carrier-protein]: step 1/2. Functionally, catalyzes the transfer of endogenously produced octanoic acid from octanoyl-acyl-carrier-protein onto the lipoyl domains of lipoate-dependent enzymes. Lipoyl-ACP can also act as a substrate although octanoyl-ACP is likely to be the physiological substrate. The polypeptide is Octanoyltransferase (Pseudomonas putida (strain GB-1)).